A 331-amino-acid chain; its full sequence is Vacuolar protein sorting-associated protein 26B (331 aa).

The disordered stretch occupies residues 310 to 331; sequence AAQRYEGSNPEPTSAQAKEETD.

Belongs to the VPS26 family. As to quaternary structure, component of the heterotrimeric retromer cargo-selective complex (CSC) which is believed to associate with variable sorting nexins to form functionally distinct retromer complex variants.

The protein localises to the cytoplasm. The protein resides in the membrane. It localises to the endosome. Functionally, acts as a component of the retromer cargo-selective complex (CSC). The CSC is believed to be the core functional component of retromer or respective retromer complex variants acting to prevent missorting of selected transmembrane cargo proteins into the lysosomal degradation pathway. Retromer mediates retrograde transport of cargo proteins from endosomes to the trans-Golgi network (TGN). This chain is Vacuolar protein sorting-associated protein 26B (vps26b), found in Danio rerio (Zebrafish).